The chain runs to 861 residues: Replication factor C subunit 1 (861 aa).

Residues 1–103 (MVNISDFFGK…SSKSSDSASN (103 aa)) form a disordered region. Polar residues predominate over residues 16–28 (RSSTSRPTRQVGS). A Phosphothreonine modification is found at Thr-38. Phosphoserine is present on Ser-40. A Phosphothreonine modification is found at Thr-63. Positions 153-243 (GKPNCLLGLT…PAEGGDGEAA (91 aa)) constitute a BRCT domain. ATP-binding positions include Thr-299, Cys-311, 353-361 (GPPGIGKTT), and Asn-456. The tract at residues 788–861 (STIGGGGVGT…GGSKKRKTKA (74 aa)) is disordered. Over residues 803 to 823 (DFEDVVDADDNPVPADDEETQ) the composition is skewed to acidic residues. Short sequence motifs (nuclear localization signal) lie at residues 830–834 (KKDKL) and 855–860 (KKRKTK). Positions 836-861 (KQKAKPTKRKTATSKPGGSKKRKTKA) are enriched in basic residues.

The protein belongs to the activator 1 large subunit family. In terms of assembly, replication factor C (RFC) is a heteropentamer of subunits RFC1, RFC2, RFC3, RFC4 and RFC5 and forms a complex with POL30/PCNA in the presence of ATP. Interacts with ECO1 and POL30/PCNA.

The protein resides in the nucleus. In terms of biological role, component of the ATP-dependent clamp loader RFC complex for the POL30/PCNA homotrimer DNA clamp. During a clamp loading circle, the RFC:clamp complex binds to DNA and the recognition of the double-stranded/single-stranded junction stimulates ATP hydrolysis by RFC. The complex presumably provides bipartite ATP sites in which one subunit supplies a catalytic site for hydrolysis of ATP bound to the neighboring subunit. Dissociation of RFC from the clamp leaves the clamp encircling DNA. Replication factor C (RFC or activator 1) complex acts during elongation of primed DNA templates by DNA polymerase delta and epsilon. RFC has an essential but redundant activity in sister chromatid cohesion establishment. The chain is Replication factor C subunit 1 (RFC1) from Saccharomyces cerevisiae (strain ATCC 204508 / S288c) (Baker's yeast).